We begin with the raw amino-acid sequence, 119 residues long: Large ribosomal subunit protein bL20 (119 aa).

It belongs to the bacterial ribosomal protein bL20 family.

In terms of biological role, binds directly to 23S ribosomal RNA and is necessary for the in vitro assembly process of the 50S ribosomal subunit. It is not involved in the protein synthesizing functions of that subunit. In Rhodopseudomonas palustris (strain BisB5), this protein is Large ribosomal subunit protein bL20.